A 130-amino-acid polypeptide reads, in one-letter code: Small ribosomal subunit protein uS11 (130 aa).

It belongs to the universal ribosomal protein uS11 family. As to quaternary structure, part of the 30S ribosomal subunit. Interacts with proteins S7 and S18. Binds to IF-3.

In terms of biological role, located on the platform of the 30S subunit, it bridges several disparate RNA helices of the 16S rRNA. Forms part of the Shine-Dalgarno cleft in the 70S ribosome. The protein is Small ribosomal subunit protein uS11 of Prochlorococcus marinus (strain NATL1A).